Here is a 516-residue protein sequence, read N- to C-terminus: MTMEDRIDELREKREEALKGGGEDRIASQHDKGKMTARERIDYFLDDGTFREFDQFRTHRNHKFGMEETKLPGDGVITGHGEVDGRTVFVFAHDFTVFGGSLGEVFAEKICKVMDKAMEVGAPVIGLNDSAGARIQEGVQSLGGFGEIFRRNTEASGVVPQISAIMGPCAGGAVYSPALTDFTFMVRDTSHMFITGPDVIKTVTGEEVTFDELGGATTHTSTSGVAHFATDTEEQALDDIRHLLSYLPQNNVEDPPRVEPWDDPERVADELEEIVPDQPRKPYDIHDVLNGVLDEGSFFGVQEDFAKNIVVGFGRLDGHSVGIVANQPRVNAGTLDIEASEKGARFIRFCDSFNIPILSFVDVPGFLPGTDQEHNGIIRHGAKLLYAYSEATVPLMTVITRKAYGGAYDVMASKHLGADVNYAWPTAEIAVMGPQGAVNILYRDELEAADDPDARRDELIEEYREEFANPYTAADRGFVDDVIEPGDTRNRLIADLRMLKSKRKSQPDKKHGNIPL.

The interval 1 to 32 (MTMEDRIDELREKREEALKGGGEDRIASQHDK) is disordered. Residues 3 to 259 (MEDRIDELRE…NNVEDPPRVE (257 aa)) enclose the CoA carboxyltransferase N-terminal domain. The CoA carboxyltransferase C-terminal domain occupies 263-509 (DPERVADELE…KSKRKSQPDK (247 aa)).

This sequence belongs to the AccD/PCCB family. As to quaternary structure, the propionyl coenzyme A carboxylase (PCC) complex is composed of three subunits: PccA (biotin carboxylase and biotin-carboxyl carrier), PccB (carboxyltransferase) and PccX.

It carries out the reaction propanoyl-CoA + hydrogencarbonate + ATP = (S)-methylmalonyl-CoA + ADP + phosphate + H(+). The protein operates within metabolic intermediate metabolism; propanoyl-CoA degradation; succinyl-CoA from propanoyl-CoA: step 1/3. Functionally, part of the propionyl coenzyme A carboxylase (PCC) complex involved in propionate utilization and in the production of the poly(3-hydroxybutyrate-co-3-hydroxyvalerate)(PHBV), which is a water-insoluble biopolymer used as intracellular energy reserve material when cells grow under conditions of nutrient limitation. The complex catalyzes the carboxylation of propionyl-CoA to methylmalonyl-CoA. PCC is also able to catalyze the carboxylation of acetyl-CoA. The protein is Propionyl-CoA carboxylase, carboxyltransferase subunit of Haloferax mediterranei (strain ATCC 33500 / DSM 1411 / JCM 8866 / NBRC 14739 / NCIMB 2177 / R-4) (Halobacterium mediterranei).